Consider the following 473-residue polypeptide: Photosystem II CP43 reaction center protein (473 aa).

Positions 1 to 14 (MKTLYSLRRFYHVE) are excised as a propeptide. Position 15 is an N-acetylthreonine (threonine 15). Phosphothreonine is present on threonine 15. 5 helical membrane-spanning segments follow: residues 69–93 (LFEVAHFVPEKPMYEQGLILLPHLA), 134–155 (LLGPETLEESFPFFGYVWKDRN), 178–200 (KALYFGGVYDTWAPGGGDVRKIT), 255–275 (KPFAWARRALVWSGEAYLSYS), and 291–312 (WFNNTAYPSEFYGPTGPEASQA). Glutamate 367 is a [CaMn4O5] cluster binding site. The chain crosses the membrane as a helical span at residues 447–471 (RARAAAAGFEKGIDRDFEPVLSMTP).

Belongs to the PsbB/PsbC family. PsbC subfamily. As to quaternary structure, PSII is composed of 1 copy each of membrane proteins PsbA, PsbB, PsbC, PsbD, PsbE, PsbF, PsbH, PsbI, PsbJ, PsbK, PsbL, PsbM, PsbT, PsbX, PsbY, PsbZ, Psb30/Ycf12, at least 3 peripheral proteins of the oxygen-evolving complex and a large number of cofactors. It forms dimeric complexes. Requires Binds multiple chlorophylls and provides some of the ligands for the Ca-4Mn-5O cluster of the oxygen-evolving complex. It may also provide a ligand for a Cl- that is required for oxygen evolution. PSII binds additional chlorophylls, carotenoids and specific lipids. as cofactor.

It is found in the plastid. It localises to the chloroplast thylakoid membrane. Functionally, one of the components of the core complex of photosystem II (PSII). It binds chlorophyll and helps catalyze the primary light-induced photochemical processes of PSII. PSII is a light-driven water:plastoquinone oxidoreductase, using light energy to abstract electrons from H(2)O, generating O(2) and a proton gradient subsequently used for ATP formation. This Aethionema cordifolium (Lebanon stonecress) protein is Photosystem II CP43 reaction center protein.